Reading from the N-terminus, the 349-residue chain is Glycerol-3-phosphate dehydrogenase [NAD(P)+] (349 aa).

NADPH contacts are provided by Ser-12, Trp-13, and Lys-107. Lys-107, Gly-138, and Ser-140 together coordinate sn-glycerol 3-phosphate. Ala-142 provides a ligand contact to NADPH. Lys-193, Asp-246, Ser-256, Arg-257, and Asn-258 together coordinate sn-glycerol 3-phosphate. The active-site Proton acceptor is Lys-193. Residue Arg-257 coordinates NADPH. NADPH-binding residues include Val-281 and Glu-283.

Belongs to the NAD-dependent glycerol-3-phosphate dehydrogenase family.

Its subcellular location is the cytoplasm. The enzyme catalyses sn-glycerol 3-phosphate + NAD(+) = dihydroxyacetone phosphate + NADH + H(+). The catalysed reaction is sn-glycerol 3-phosphate + NADP(+) = dihydroxyacetone phosphate + NADPH + H(+). Its pathway is membrane lipid metabolism; glycerophospholipid metabolism. Catalyzes the reduction of the glycolytic intermediate dihydroxyacetone phosphate (DHAP) to sn-glycerol 3-phosphate (G3P), the key precursor for phospholipid synthesis. This is Glycerol-3-phosphate dehydrogenase [NAD(P)+] from Pelotomaculum thermopropionicum (strain DSM 13744 / JCM 10971 / SI).